The chain runs to 132 residues: Small ribosomal subunit protein uS8 (132 aa).

Belongs to the universal ribosomal protein uS8 family. In terms of assembly, part of the 30S ribosomal subunit. Contacts proteins S5 and S12.

Its function is as follows. One of the primary rRNA binding proteins, it binds directly to 16S rRNA central domain where it helps coordinate assembly of the platform of the 30S subunit. The chain is Small ribosomal subunit protein uS8 (rpsH) from Caldanaerobacter subterraneus subsp. tengcongensis (strain DSM 15242 / JCM 11007 / NBRC 100824 / MB4) (Thermoanaerobacter tengcongensis).